Here is a 102-residue protein sequence, read N- to C-terminus: Co-chaperonin GroES (102 aa).

This sequence belongs to the GroES chaperonin family. Heptamer of 7 subunits arranged in a ring. Interacts with the chaperonin GroEL.

It localises to the cytoplasm. Its function is as follows. Together with the chaperonin GroEL, plays an essential role in assisting protein folding. The GroEL-GroES system forms a nano-cage that allows encapsulation of the non-native substrate proteins and provides a physical environment optimized to promote and accelerate protein folding. GroES binds to the apical surface of the GroEL ring, thereby capping the opening of the GroEL channel. The polypeptide is Co-chaperonin GroES (Streptomyces coelicolor (strain ATCC BAA-471 / A3(2) / M145)).